Reading from the N-terminus, the 549-residue chain is Glucose-6-phosphate isomerase (549 aa).

The active-site Proton donor is Glu-353. Residues His-384 and Lys-513 contribute to the active site.

Belongs to the GPI family.

The protein resides in the cytoplasm. The enzyme catalyses alpha-D-glucose 6-phosphate = beta-D-fructose 6-phosphate. It functions in the pathway carbohydrate biosynthesis; gluconeogenesis. Its pathway is carbohydrate degradation; glycolysis; D-glyceraldehyde 3-phosphate and glycerone phosphate from D-glucose: step 2/4. Catalyzes the reversible isomerization of glucose-6-phosphate to fructose-6-phosphate. This chain is Glucose-6-phosphate isomerase, found in Brucella anthropi (strain ATCC 49188 / DSM 6882 / CCUG 24695 / JCM 21032 / LMG 3331 / NBRC 15819 / NCTC 12168 / Alc 37) (Ochrobactrum anthropi).